Consider the following 373-residue polypeptide: MLIGVPKEIKNNENRVAITPAGVEAFVLAGHKVYIEKGAGLGSAITDEEYVAAGAEILATAKEVFDTAEMIIKVKEPLKSEFELFKEGQILFTYLHLAPEPQLTKALLDKKITGIAYETVQLADRSLPLLTPMSEIAGRMSIQLGAQYLEKQEGGKGVLLGGVPGVEPAEVVIVGGGIVGTNAAKIAVGMGAKVTILDVNTRRLAYLDDIFGNKVTTLMSNSFNIAKAVKKADLLVGCVLIPGAKAPKLVSEEMVKSMQPGSVIVDVAIDQGGSIETIDRITTHDNPTYEKFGVIHYAVANIPGAVARTSTYALTNDTLPYALQIANKGYKQAVIENPALLKGLNTLNGKVTYEAVAKAHDLPYTPAEKALNE.

Positions 15 and 75 each coordinate substrate. The active-site Proton donor/acceptor is His-96. Residues Ser-134, Ile-178–Val-179, Asp-198, Ser-220, Val-239–Leu-240, Val-267–Asp-270, Arg-280, and Val-299–Ile-302 each bind NAD(+). The active-site Proton donor/acceptor is Asp-270.

Belongs to the AlaDH/PNT family. As to quaternary structure, homohexamer. Trimer of dimer.

It localises to the cytoplasm. It catalyses the reaction L-alanine + NAD(+) + H2O = pyruvate + NH4(+) + NADH + H(+). The protein operates within amino-acid degradation; L-alanine degradation via dehydrogenase pathway; NH(3) and pyruvate from L-alanine: step 1/1. In terms of biological role, catalyzes the reversible reductive amination of pyruvate to L-alanine. This enzyme is a key factor in the assimilation of L-alanine as an energy source through the tricarboxylic acid cycle. The polypeptide is Alanine dehydrogenase (Methanococcus maripaludis (strain DSM 14266 / JCM 13030 / NBRC 101832 / S2 / LL)).